The chain runs to 314 residues: uncharacterized protein (314 aa).

The 98-residue stretch at 192–289 (TEVKLHIKDN…GSSPGLFRSL (98 aa)) folds into the HTH araC/xylS-type domain. 2 DNA-binding regions (H-T-H motif) span residues 209–230 (TDVASHFHISGRHLSRLFAAEL) and 257–279 (IKEIAEEIGFSVHYFTRVFSAKI).

This is an uncharacterized protein from Bacillus subtilis (strain 168).